The sequence spans 435 residues: AP-2 complex subunit mu (435 aa).

Positions 170–434 (RNELFLDVLE…IGRSGIYETR (265 aa)) constitute an MHD domain. Residues Lys-341, Lys-345, and Lys-354 each contribute to the a 1,2-diacyl-sn-glycero-3-phospho-(1D-myo-inositol-3,4,5-trisphosphate) site.

The protein belongs to the adaptor complexes medium subunit family. Adaptor protein complex 2 (AP-2) is a heterotetramer composed of two large adaptins (alpha-type subunit and beta-type subunit), a medium adaptin (mu-type subunit) and a small adaptin (sigma-type subunit).

It is found in the cell membrane. The protein resides in the membrane. Its subcellular location is the coated pit. Component of the adaptor complexes which link clathrin to receptors in coated vesicles. Clathrin-associated protein complexes are believed to interact with the cytoplasmic tails of membrane proteins, leading to their selection and concentration. AP50 is a subunit of the plasma membrane adaptor. The complex binds polyphosphoinositide-containing lipids. The polypeptide is AP-2 complex subunit mu (ap2m1) (Xenopus laevis (African clawed frog)).